The sequence spans 429 residues: G2/mitotic-specific cyclin-B1 (429 aa).

Residues 71–114 (TGKVSAKIPPPKPLEKVPPVSEPEVELAETHEPEPVMDEKLSPE) form a disordered region. At K73 the chain carries N6-acetyllysine. A compositionally biased stretch (basic and acidic residues) spans 98–112 (AETHEPEPVMDEKLS). Position 122 is a phosphoserine; by CDK1 (S122). S124 bears the Phosphoserine mark. S129 is modified (phosphoserine; by PLK1). S143 is modified (phosphoserine). Interaction with CDK2 stretches follow at residues 165 to 173 (EYVKDIYAY) and 254 to 257 (YEEM). T317 bears the Phosphothreonine mark.

It belongs to the cyclin family. Cyclin AB subfamily. Interacts with the CDC2 protein kinase to form a serine/threonine kinase holoenzyme complex also known as maturation promoting factor (MPF). The cyclin subunit imparts substrate specificity to the complex. Binds HEI10. Interacts with catalytically active RALBP1 and CDC2 during mitosis to form an endocytotic complex during interphase. Interacts with CCNF; interaction is required for nuclear localization. Interacts with CDK5RAP3. Interacts with RFPL4A and UBE2A. Interacts with INCA1. Post-translationally, ubiquitinated by the SCF(NIPA) complex during interphase, leading to its destruction. Not ubiquitinated during G2/M phases. In terms of processing, phosphorylated by PLK1 at Ser-129 on centrosomes during prophase: phosphorylation by PLK1 does not cause nuclear import. Phosphorylation at Ser-143 was also reported to be mediated by PLK1 but Ser-129 seems to be the primary phosphorylation site.

It localises to the cytoplasm. The protein resides in the nucleus. It is found in the cytoskeleton. Its subcellular location is the microtubule organizing center. The protein localises to the centrosome. Functionally, essential for the control of the cell cycle at the G2/M (mitosis) transition. The chain is G2/mitotic-specific cyclin-B1 (CCNB1) from Mesocricetus auratus (Golden hamster).